The primary structure comprises 265 residues: Tryptophan synthase alpha chain (265 aa).

Active-site proton acceptor residues include Glu-50 and Asp-61.

Belongs to the TrpA family. As to quaternary structure, tetramer of two alpha and two beta chains.

It carries out the reaction (1S,2R)-1-C-(indol-3-yl)glycerol 3-phosphate + L-serine = D-glyceraldehyde 3-phosphate + L-tryptophan + H2O. It functions in the pathway amino-acid biosynthesis; L-tryptophan biosynthesis; L-tryptophan from chorismate: step 5/5. Functionally, the alpha subunit is responsible for the aldol cleavage of indoleglycerol phosphate to indole and glyceraldehyde 3-phosphate. The sequence is that of Tryptophan synthase alpha chain from Trichodesmium erythraeum (strain IMS101).